Here is a 296-residue protein sequence, read N- to C-terminus: POM121-like protein 12 (296 aa).

2 disordered regions span residues 1–54 (MGAA…SPWP) and 142–162 (APPE…RPAG). Residues 34 to 52 (SRSPSTPQTTPSPQGRQSP) are compositionally biased toward low complexity.

This sequence belongs to the POM121 family.

The chain is POM121-like protein 12 (POM121L12) from Homo sapiens (Human).